The following is a 177-amino-acid chain: Pyruvate synthase subunit PorC (177 aa).

As to quaternary structure, heterotetramer of one alpha, one beta, one delta and one gamma chain.

It carries out the reaction 2 oxidized [2Fe-2S]-[ferredoxin] + pyruvate + CoA = 2 reduced [2Fe-2S]-[ferredoxin] + acetyl-CoA + CO2 + H(+). The chain is Pyruvate synthase subunit PorC (porC) from Methanothermobacter marburgensis (strain ATCC BAA-927 / DSM 2133 / JCM 14651 / NBRC 100331 / OCM 82 / Marburg) (Methanobacterium thermoautotrophicum).